A 420-amino-acid polypeptide reads, in one-letter code: L-cysteine:1D-myo-inositol 2-amino-2-deoxy-alpha-D-glucopyranoside ligase (420 aa).

Cys43 is a binding site for Zn(2+). L-cysteinyl-5'-AMP contacts are provided by residues 43-46, Thr58, and 81-83; these read CGIT and NIT. Residues 45-55 carry the 'HIGH' region motif; it reads ITPYDATHLGH. Positions 187–192 match the 'ERGGDP' region motif; the sequence is ERGGDP. Trp227 lines the L-cysteinyl-5'-AMP pocket. Zn(2+) is bound at residue Cys231. 249–251 lines the L-cysteinyl-5'-AMP pocket; sequence GSD. His256 lines the Zn(2+) pocket. Ile289 lines the L-cysteinyl-5'-AMP pocket. A 'KMSKS' region motif is present at residues 295 to 299; sequence KMSKS.

The protein belongs to the class-I aminoacyl-tRNA synthetase family. MshC subfamily. In terms of assembly, monomer. Zn(2+) serves as cofactor.

The enzyme catalyses 1D-myo-inositol 2-amino-2-deoxy-alpha-D-glucopyranoside + L-cysteine + ATP = 1D-myo-inositol 2-(L-cysteinylamino)-2-deoxy-alpha-D-glucopyranoside + AMP + diphosphate + H(+). Functionally, catalyzes the ATP-dependent condensation of GlcN-Ins and L-cysteine to form L-Cys-GlcN-Ins. The polypeptide is L-cysteine:1D-myo-inositol 2-amino-2-deoxy-alpha-D-glucopyranoside ligase (Segniliparus rotundus (strain ATCC BAA-972 / CDC 1076 / CIP 108378 / DSM 44985 / JCM 13578)).